A 100-amino-acid chain; its full sequence is Urease subunit gamma (100 aa).

The protein belongs to the urease gamma subunit family. As to quaternary structure, heterotrimer of UreA (gamma), UreB (beta) and UreC (alpha) subunits. Three heterotrimers associate to form the active enzyme.

The protein localises to the cytoplasm. The catalysed reaction is urea + 2 H2O + H(+) = hydrogencarbonate + 2 NH4(+). The protein operates within nitrogen metabolism; urea degradation; CO(2) and NH(3) from urea (urease route): step 1/1. This Shewanella halifaxensis (strain HAW-EB4) protein is Urease subunit gamma.